Consider the following 160-residue polypeptide: Major pollen allergen Cor a 1 isoforms 5, 6, 11 and 16 (160 aa).

It belongs to the BetVI family.

This chain is Major pollen allergen Cor a 1 isoforms 5, 6, 11 and 16, found in Corylus avellana (European hazel).